We begin with the raw amino-acid sequence, 1426 residues long: MSQLCLWLTCQPCYAVSVRGILTGAIFILGCWGLSDFQKSLLQDLEPKDVSSYFGHHAAPFTGHPPSHLQRLRRRRTLEDILHLELLVAVGPDVSRAHQEDTERYVLTNLNIGSELLRNPSLGVQFQVHLVKLITLSDSESTPNITANITSSLMSVCEWSQTINPHDDRDPSHADLILYITRFDLELPDGNQQVRGVTQLGGACSLSWSCLITEDTGFDLGVTIAHEIGHSFGLDHDGAPGSGSTCKASGHVMAADGATPTGGTLEWSACSQRQLQHLLSTGQMHCFQDPPGLQSGLTRHQLMAQPGLYYSADDQCRVAFGSGAVACTFSREGLDVCQALSCHTDPLDQSSCSRLLVPLLDGTECGVEKWCSKARCRSLAELAPVAAVHGHWSSWGPHSPCSRSCGGGVITRRRWCNNPRPAFGGRACVGEDLQAKMCNTQACEKTQLEFMSEQCAQTDRQPLQLSQGTASFYHWDAAVQYSQGDTLCRHMCWAVGESFIVSRGDRFLDGTRCVPSGPQDDGTLSLCLLGSCRTFGCDGRMDSQKVWDACQVCGGDNSTCSSRNGSFTAGRAREYVTFLIVTPNMTNAHIVNRRPLFTHLAVRIQGHYIVAGKTSISPNTTYPSLLEDYRVEYRVTLTEDQLPHLEEIHIRGPVRDDIEIQVYRRYGGEYGDLTHPDITFSYFQLKQQAAWVWTAKRGPCSVSCGAGLRWVTYSCQDQAQDKWVKNAQCQGSPQPPAWQEPCVSAPCSPYWVAGDFSPCSVSCGGGLRERSLRCVETQDGFLKTLPPARCRAVAQQPAAEVENCNSQPCPTRWEVSDPGPCMSSACEAGLDSRNVTCVSRAGDPEKPETAGPCRTDEMSAMLEPCSRSLCSPGLGQVDNTMSLGEEAPSPVGSDKPGAQAEHVWTPLVGLCSISCGRGLKELYFLCMDSVLKMPVQEELCGLASKPPSRWEVCRARPCPARWETQVLAPCPVTCGGGRVPLSVRCVQLDRGHPISVPHSKCSPVPKPGSFEDCSPEPCPARWKVLSLGPCSASCGLGTATQMVACMQLDQGHDNEVNETFCKALVRPQASVPCLIADCAFRWHISAWTECSVSCGDGIQRRHDTCLGPQAQVPVPANFCQHLPKPMTVRGCWAGPCAGQETSSSLPHKEATLPSQTQAAATVASLQWSQPRARTPTLFSASQSLGLQENLEEHGACGRQYLEPTGTIHMRDQGRLDCVVAIGRPLGEVVTLQILESSLKCSAGEQLLLWGRFTWRKTCRKMPGMTFSTKTNTVVVKQHRVLPGGGVLLRYWSQPAPGTFYKECDRQLFGPRGEIVSPSLSPDGRKAGTCRVFISVAPQARIAIRALASDMGTASEGTNANYVSIRDIHSLRTTTFWGQQVLYWESEGSEAELEFSPGFLEAHASLQGEYWTISPRTSEQDDSLALS.

The first 33 residues, 1–33 (MSQLCLWLTCQPCYAVSVRGILTGAIFILGCWG), serve as a signal peptide directing secretion. Positions 34-76 (LSDFQKSLLQDLEPKDVSSYFGHHAAPFTGHPPSHLQRLRRRR) are excised as a propeptide. The Peptidase M12B domain occupies 74–291 (RRRTLEDILH…GQMHCFQDPP (218 aa)). Glu-85 lines the Ca(2+) pocket. Asn-144 and Asn-148 each carry an N-linked (GlcNAc...) asparagine glycan. 3 cysteine pairs are disulfide-bonded: Cys-157–Cys-210, Cys-204–Cys-286, and Cys-246–Cys-270. Residues Asp-175, Asp-184, Glu-186, Asp-189, and Glu-214 each coordinate Ca(2+). His-226 is a Zn(2+) binding site. Glu-227 is an active-site residue. Zn(2+)-binding residues include His-230 and His-236. Ca(2+)-binding residues include Thr-281 and Asp-289. One can recognise a Disintegrin domain in the interval 295–388 (SGLTRHQLMA…LAELAPVAAV (94 aa)). 11 disulfides stabilise this stretch: Cys-316-Cys-342, Cys-327-Cys-352, Cys-337-Cys-371, Cys-365-Cys-376, Cys-401-Cys-438, Cys-405-Cys-443, Cys-416-Cys-428, Cys-488-Cys-527, Cys-513-Cys-532, Cys-537-Cys-553, and Cys-550-Cys-560. Residues 389 to 444 (HGHWSSWGPHSPCSRSCGGGVITRRRWCNNPRPAFGGRACVGEDLQAKMCNTQACE) enclose the TSP type-1 1 domain. Residues 445-561 (KTQLEFMSEQ…VCGGDNSTCS (117 aa)) form a cysteine-rich region. The Cell attachment site motif lies at 503-505 (RGD). The segment at 556–685 (DNSTCSSRNG…PDITFSYFQL (130 aa)) is spacer. 4 N-linked (GlcNAc...) asparagine glycosylation sites follow: Asn-557, Asn-564, Asn-584, and Asn-619. TSP type-1 domains lie at 687 to 746 (QQAA…VSAP), 747 to 810 (CSPY…QPCP), 808 to 871 (PCPT…SLCS), 904 to 957 (WTPL…RARP), 958 to 1019 (CPAR…EPCP), 1020 to 1078 (ARWK…IADC), and 1079 to 1137 (AFRW…GPCA). 2 O-linked (Fuc...) serine glycosylation sites follow: Ser-703 and Ser-762. A glycan (N-linked (GlcNAc...) asparagine) is linked at Asn-834. An O-linked (Fuc...) serine glycan is attached at Ser-914. The O-linked (Fuc...) threonine glycan is linked to Thr-973. Residue Ser-1033 is glycosylated (O-linked (Fuc...) serine). An N-linked (GlcNAc...) asparagine glycan is attached at Asn-1057. The O-linked (Fuc...) serine glycan is linked to Ser-1093. CUB domains are found at residues 1195 to 1302 (ACGR…FYKE) and 1293 to 1426 (QPAP…LALS).

The cofactor is Zn(2+). It depends on Ca(2+) as a cofactor. In terms of processing, the precursor is processed by a furin endopeptidase which cleaves off the pro-domain. O-glycosylated. O-fucosylated by POFUT2 on a serine or a threonine residue found within the consensus sequence C1-X(2)-(S/T)-C2-G of the TSP type-1 repeat domains where C1 and C2 are the first and second cysteine residue of the repeat, respectively. Fucosylated repeats can then be further glycosylated by the addition of a beta-1,3-glucose residue by the glucosyltransferase, B3GALTL. Fucosylation mediates the efficient secretion of ADAMTS13. May also be C-glycosylated on tryptophan residues within the consensus sequence W-X-X-W of the TPRs, and also N-glycosylated. These other glycosylations can also facilitate secretion. Plasma. Expression is consistently high in liver, medium in lung and spleen, low in skeletal muscle and undetectable in heart, brain, kidney and testis.

It localises to the secreted. It catalyses the reaction The enzyme cleaves the von Willebrand factor at bond 842-Tyr-|-Met-843 within the A2 domain.. With respect to regulation, zinc and calcium ions cooperatively modulate enzyme activity. The cleavage of the pro-domain is not required for protease activity. Dependence on calcium for proteolytic activity is mediated by the high affinity site. Its function is as follows. Cleaves the vWF multimers in plasma into smaller forms thereby controlling vWF-mediated platelet thrombus formation. The protein is A disintegrin and metalloproteinase with thrombospondin motifs 13 (Adamts13) of Mus musculus (Mouse).